The primary structure comprises 156 residues: Small ribosomal subunit protein uS7 (156 aa).

Belongs to the universal ribosomal protein uS7 family. Part of the 30S ribosomal subunit. Contacts proteins S9 and S11.

In terms of biological role, one of the primary rRNA binding proteins, it binds directly to 16S rRNA where it nucleates assembly of the head domain of the 30S subunit. Is located at the subunit interface close to the decoding center, probably blocks exit of the E-site tRNA. This is Small ribosomal subunit protein uS7 from Syntrophomonas wolfei subsp. wolfei (strain DSM 2245B / Goettingen).